Consider the following 389-residue polypeptide: Flagellar P-ring protein (389 aa).

The N-terminal stretch at 1–33 is a signal peptide; sequence MRPLVAARRRAAACCALAACMLALAFAPAAARA.

Belongs to the FlgI family. The basal body constitutes a major portion of the flagellar organelle and consists of four rings (L,P,S, and M) mounted on a central rod.

Its subcellular location is the periplasm. It is found in the bacterial flagellum basal body. Functionally, assembles around the rod to form the L-ring and probably protects the motor/basal body from shearing forces during rotation. The sequence is that of Flagellar P-ring protein from Burkholderia pseudomallei (strain K96243).